We begin with the raw amino-acid sequence, 429 residues long: Esterase/beta-lactamase LipL (429 aa).

S88 serves as the catalytic Acyl-ester intermediate.

Belongs to the beta-lactamase family.

Its subcellular location is the secreted. It localises to the cell wall. The protein resides in the cell membrane. It catalyses the reaction a fatty acid ester + H2O = an aliphatic alcohol + a fatty acid + H(+). The catalysed reaction is an acetyl ester + H2O = an aliphatic alcohol + acetate + H(+). It carries out the reaction a butanoate ester + H2O = an aliphatic alcohol + butanoate + H(+). The enzyme catalyses an octanoate ester + H2O = an aliphatic alcohol + octanoate + H(+). It catalyses the reaction decanoate ester + H2O = decanoate + an aliphatic alcohol + H(+). The catalysed reaction is a dodecanoate ester + H2O = an aliphatic alcohol + dodecanoate + H(+). It carries out the reaction a tetradecanoate ester + H2O = an aliphatic alcohol + tetradecanoate + H(+). The enzyme catalyses hexadecanoate ester + H2O = an aliphatic alcohol + hexadecanoate + H(+). It catalyses the reaction octadecanoate ester + H2O = an aliphatic alcohol + octadecanoate + H(+). The catalysed reaction is a hexanoate ester + H2O = an aliphatic alcohol + hexanoate + H(+). It carries out the reaction a beta-lactam + H2O = a substituted beta-amino acid. Esterase and beta-lactamase activities are inhibited by the active site residue modifiers phenylmethanesulfonylflouride (PMSF) and diethylpyrocarbonate (DEPC). Functionally, shows both esterase and beta-lactamase activities, with a much higher activity against phenyl esters than against beta-lactams. Shows esterase activity against both long-chain and short-chain p-nitrophenol (pNP) esters, with a preference for shorter chain esters. Hydrolyzes substrates containing beta-lactam ring such as nitrocefin and ampicillin. Functions as an immunogen that activates both humoral and cell-mediated responses. In Mycobacterium tuberculosis (strain ATCC 25618 / H37Rv), this protein is Esterase/beta-lactamase LipL.